Here is a 150-residue protein sequence, read N- to C-terminus: Transcription antitermination protein NusB (150 aa).

It belongs to the NusB family.

Involved in transcription antitermination. Required for transcription of ribosomal RNA (rRNA) genes. Binds specifically to the boxA antiterminator sequence of the ribosomal RNA (rrn) operons. This is Transcription antitermination protein NusB from Streptococcus pyogenes serotype M3 (strain ATCC BAA-595 / MGAS315).